The sequence spans 1043 residues: Isoleucine--tRNA ligase (1043 aa).

Residues P48 to H58 carry the 'HIGH' region motif. Residues K591 to R595 carry the 'KMSKS' region motif. Position 594 (K594) interacts with ATP.

It belongs to the class-I aminoacyl-tRNA synthetase family. IleS type 2 subfamily. In terms of assembly, monomer. The cofactor is Zn(2+).

It localises to the cytoplasm. It carries out the reaction tRNA(Ile) + L-isoleucine + ATP = L-isoleucyl-tRNA(Ile) + AMP + diphosphate. Catalyzes the attachment of isoleucine to tRNA(Ile). As IleRS can inadvertently accommodate and process structurally similar amino acids such as valine, to avoid such errors it has two additional distinct tRNA(Ile)-dependent editing activities. One activity is designated as 'pretransfer' editing and involves the hydrolysis of activated Val-AMP. The other activity is designated 'posttransfer' editing and involves deacylation of mischarged Val-tRNA(Ile). The chain is Isoleucine--tRNA ligase from Chlamydia pneumoniae (Chlamydophila pneumoniae).